The primary structure comprises 304 residues: Mycothiol acetyltransferase (304 aa).

2 consecutive N-acetyltransferase domains span residues 16 to 155 (AHVE…RTGL) and 164 to 304 (VALS…YRRA). Position 46 (Glu-46) interacts with 1D-myo-inositol 2-(L-cysteinylamino)-2-deoxy-alpha-D-glucopyranoside. Residue 87–89 (LVV) participates in acetyl-CoA binding. Glu-190, Lys-230, and Glu-237 together coordinate 1D-myo-inositol 2-(L-cysteinylamino)-2-deoxy-alpha-D-glucopyranoside. Acetyl-CoA contacts are provided by residues 241-243 (LGV) and 248-254 (AARGLGS). Tyr-275 contributes to the 1D-myo-inositol 2-(L-cysteinylamino)-2-deoxy-alpha-D-glucopyranoside binding site.

This sequence belongs to the acetyltransferase family. MshD subfamily. In terms of assembly, monomer.

The enzyme catalyses 1D-myo-inositol 2-(L-cysteinylamino)-2-deoxy-alpha-D-glucopyranoside + acetyl-CoA = mycothiol + CoA + H(+). Catalyzes the transfer of acetyl from acetyl-CoA to desacetylmycothiol (Cys-GlcN-Ins) to form mycothiol. This Clavibacter sepedonicus (Clavibacter michiganensis subsp. sepedonicus) protein is Mycothiol acetyltransferase.